Reading from the N-terminus, the 190-residue chain is Putative acetyltransferase DDB_G0275913 (190 aa).

The protein belongs to the transferase hexapeptide repeat family.

The protein is Putative acetyltransferase DDB_G0275913 of Dictyostelium discoideum (Social amoeba).